The following is a 251-amino-acid chain: Hydroxyacylglutathione hydrolase (251 aa).

Residues His-53, His-55, Asp-57, His-58, His-110, Asp-127, and His-165 each coordinate Zn(2+).

This sequence belongs to the metallo-beta-lactamase superfamily. Glyoxalase II family. Monomer. Zn(2+) serves as cofactor.

It catalyses the reaction an S-(2-hydroxyacyl)glutathione + H2O = a 2-hydroxy carboxylate + glutathione + H(+). It functions in the pathway secondary metabolite metabolism; methylglyoxal degradation; (R)-lactate from methylglyoxal: step 2/2. Thiolesterase that catalyzes the hydrolysis of S-D-lactoyl-glutathione to form glutathione and D-lactic acid. The chain is Hydroxyacylglutathione hydrolase from Escherichia coli O6:K15:H31 (strain 536 / UPEC).